The following is a 72-amino-acid chain: Large ribosomal subunit protein bL31 (72 aa).

It belongs to the bacterial ribosomal protein bL31 family. Type A subfamily. In terms of assembly, part of the 50S ribosomal subunit.

Functionally, binds the 23S rRNA. The protein is Large ribosomal subunit protein bL31 of Prosthecochloris aestuarii (strain DSM 271 / SK 413).